A 766-amino-acid polypeptide reads, in one-letter code: 5-methyltetrahydropteroyltriglutamate--homocysteine methyltransferase (766 aa).

5-methyltetrahydropteroyltri-L-glutamate-binding positions include 16–19 (RELK) and Lys119. Residues 440–442 (IGS) and Glu493 each bind L-homocysteine. L-methionine is bound by residues 440-442 (IGS) and Glu493. Residues 524–525 (RC) and Trp570 each bind 5-methyltetrahydropteroyltri-L-glutamate. Residue Asp608 coordinates L-homocysteine. An L-methionine-binding site is contributed by Asp608. Glu614 provides a ligand contact to 5-methyltetrahydropteroyltri-L-glutamate. His650, Cys652, and Glu674 together coordinate Zn(2+). The active-site Proton donor is the His703. Cys735 contacts Zn(2+).

This sequence belongs to the vitamin-B12 independent methionine synthase family. Zn(2+) serves as cofactor.

The catalysed reaction is 5-methyltetrahydropteroyltri-L-glutamate + L-homocysteine = tetrahydropteroyltri-L-glutamate + L-methionine. It functions in the pathway amino-acid biosynthesis; L-methionine biosynthesis via de novo pathway; L-methionine from L-homocysteine (MetE route): step 1/1. In terms of biological role, catalyzes the transfer of a methyl group from 5-methyltetrahydrofolate to homocysteine resulting in methionine formation. This is 5-methyltetrahydropteroyltriglutamate--homocysteine methyltransferase from Pseudomonas aeruginosa (strain UCBPP-PA14).